Reading from the N-terminus, the 351-residue chain is Mitochondrial mRNA pseudouridine synthase RPUSD3 (351 aa).

The N-terminal 25 residues, 1-25, are a transit peptide targeting the mitochondrion; that stretch reads MRAVLAREMDGRRVLGRFWSGWRRG. Positions 33–58 are disordered; the sequence is EDAGFGTEARHQRQPRGSCQRSGPLG. The residue at position 71 (Ser-71) is a Phosphoserine.

The protein belongs to the pseudouridine synthase RluA family. In terms of assembly, forms a regulatory protein-RNA complex, consisting of RCC1L, NGRN, RPUSD3, RPUSD4, TRUB2, FASTKD2 and 16S mt-rRNA.

It is found in the mitochondrion matrix. The enzyme catalyses a uridine in mRNA = a pseudouridine in mRNA. Its function is as follows. Catalyzes uridine to pseudouridine isomerization (pseudouridylation) of specific mitochondrial mRNAs (mt-mRNAs), a post-transcriptional modification necessary for their translation. Acts at position 390 in COXI mt-mRNA and at position 697-699 in mitochondrial COXIII mt-mRNA. As a component of a functional protein-RNA module, consisting of RCC1L, NGRN, RPUSD3, RPUSD4, TRUB2, FASTKD2 and 16S mitochondrial ribosomal RNA (16S mt-rRNA), controls 16S mt-rRNA abundance and may play a role in mitochondrial ribosome biogenesis. This chain is Mitochondrial mRNA pseudouridine synthase RPUSD3, found in Homo sapiens (Human).